Consider the following 355-residue polypeptide: BAG family molecular chaperone regulator 1 (355 aa).

A disordered region spans residues 1–112 (MAGRSAARRP…KNVTGTQVEE (112 aa)). Basic and acidic residues predominate over residues 26-39 (PAREPRQSESRAER). Composition is skewed to polar residues over residues 80–91 (SSQSEKVGSSSR) and 102–111 (SKNVTGTQVE). Repeat copies occupy residues 103-108 (KNVTGT), 111-116 (EEVTKI), 117-122 (EEATQT), 123-128 (EEVTVA), 129-134 (EEVTQT), 141-146 (EEMVQT), and 147-152 (EEMETP). A 7 X 6 AA tandem repeat of E-E-X(4) region spans residues 111 to 209 (EEVTKIEEAT…LIFKGKSLKE (99 aa)). Residues 132 to 151 (TQTDNMAKTEEMVQTEEMET) form a disordered region. Positions 154 to 234 (LSVIVTHSNE…VMLIGEKSNP (81 aa)) constitute a Ubiquitin-like domain. The segment at 182–229 (DLAQLVEEATGVPLPFQKLIFKGKSLKEMETPLSALGMQNGCRVMLIG) is interaction with HSPA8. The segment at 226–355 (MLIGEKSNPE…LQSTNLALAE (130 aa)) is interaction with PPP1R15A. A BAG domain is found at 256–336 (HLQELNKELS…VFLAECDTVE (81 aa)).

As to quaternary structure, homodimer. Forms a heteromeric complex with HSP70/HSC70. Binds to the ATPase domain of HSP/HSC70 chaperones. Interacts with NR3C1. Interacts with the N-terminal region of MAPRE2. Interacts with PPP1R15A. Interacts with BCL2 in an ATP-dependent manner. Interacts with SIAH1, HSPA8 (via NBD), HSPA1A (via NBD) and HSPA1B (via NBD). Interacts with SIAH2. Interacts with ESR1; the interaction is promoted in the absence of estradiol (17-beta-estradiol/E2). Ubiquitinated; mediated by SIAH1 or SIAH2 and leading to its subsequent proteasomal degradation. Isoform 2 is expressed in the heart, lung, kidney and spinal cord. Isoform 1 and isoform 2 are expressed in hematopoietic cell lines. The levels of isoform 2 are relatively constant in all the cell lines examined while the levels of isoform 1 are more variable (at protein level). Isoform 1 is expressed in the lung and kidney. Isoform 2 is expressed in various tissues, with highest levels in testis and stomach.

It localises to the nucleus. It is found in the cytoplasm. In terms of biological role, co-chaperone for HSP70 and HSC70 chaperone proteins. Acts as a nucleotide-exchange factor (NEF) promoting the release of ADP from the HSP70 and HSC70 proteins thereby triggering client/substrate protein release. Nucleotide release is mediated via its binding to the nucleotide-binding domain (NBD) of HSPA8/HSC70 where as the substrate release is mediated via its binding to the substrate-binding domain (SBD) of HSPA8/HSC70. Inhibits the pro-apoptotic function of PPP1R15A, and has anti-apoptotic activity. Markedly increases the anti-cell death function of BCL2 induced by various stimuli. Involved in the STUB1-mediated proteasomal degradation of ESR1 in response to age-related circulating estradiol (17-beta-estradiol/E2) decline, thereby promotes neuronal apoptosis in response to ischemic reperfusion injury. The protein is BAG family molecular chaperone regulator 1 (Bag1) of Mus musculus (Mouse).